Reading from the N-terminus, the 257-residue chain is Glucanase inhibitor protein 1 (257 aa).

Residues 1–28 (MKVFPALTSALVALGTAGVEAEHVQRSL) form the signal peptide. The Peptidase S1 domain maps to 29 to 256 (VMGGGTVPVG…GLEWINSVIK (228 aa)). A disulfide bond links cysteine 56 and cysteine 72. 2 N-linked (GlcNAc...) asparagine glycosylation sites follow: asparagine 107 and asparagine 180. Intrachain disulfides connect cysteine 181–cysteine 191 and cysteine 201–cysteine 232. Residue asparagine 213 is glycosylated (N-linked (GlcNAc...) asparagine).

This sequence belongs to the peptidase S1 family. As to quaternary structure, interacts with host endoglucanases EGaseA.

Its subcellular location is the secreted. Its function is as follows. Secreted effector that suppresses host plant glucan elicitor-mediated defense responses. Targets host endoglucanase EGaseA and inhibits the EGaseA-mediated release of elicitor-active glucan oligosaccharides from P.sojae cell walls. This Phytophthora sojae (Soybean stem and root rot agent) protein is Glucanase inhibitor protein 1.